The sequence spans 508 residues: Adenylosuccinate synthetase 1, chloroplastic (508 aa).

The N-terminal 56 residues, 1–56 (MNISILRLDSNPITTATSPATATANHRSGILGCYNGTYSCRLNQLQQRKKNPSIIV), are a transit peptide targeting the chloroplast. GTP-binding positions include 95-101 (GDEGKGK) and 123-125 (GHT). Residue Asp96 is the Proton acceptor of the active site. Positions 96 and 123 each coordinate Mg(2+). Residues 96–99 (DEGK), 121–124 (NAGH), Thr213, Arg227, Gln307, Thr322, and Arg386 each bind IMP. His124 functions as the Proton donor in the catalytic mechanism. 382–388 (TTTGRPR) is a binding site for substrate. Residues Arg388, 414–416 (KLD), and 497–499 (GIG) contribute to the GTP site.

This sequence belongs to the adenylosuccinate synthetase family. In terms of assembly, homodimer. Requires Mg(2+) as cofactor.

It is found in the plastid. The protein resides in the chloroplast. It carries out the reaction IMP + L-aspartate + GTP = N(6)-(1,2-dicarboxyethyl)-AMP + GDP + phosphate + 2 H(+). It participates in purine metabolism; AMP biosynthesis via de novo pathway; AMP from IMP: step 1/2. In terms of biological role, plays an important role in the de novo pathway and in the salvage pathway of purine nucleotide biosynthesis. Catalyzes the first committed step in the biosynthesis of AMP from IMP. The sequence is that of Adenylosuccinate synthetase 1, chloroplastic from Capsicum frutescens (Cayenne pepper).